An 87-amino-acid chain; its full sequence is Conotoxin QcMNCL-XIII0.1 (87 aa).

The signal sequence occupies residues methionine 1–alanine 18. Residues leucine 19–arginine 34 constitute a propeptide that is removed on maturation.

Post-translationally, contains 4 disulfide bonds. Expressed by the venom duct.

It localises to the secreted. In terms of biological role, may interact and inhibit Cav3.1/CACNA1G calcium channels. In a ex vivo model, shows ability to block nerve signal transduction. The sequence is that of Conotoxin QcMNCL-XIII0.1 from Conus quercinus (Oak cone).